We begin with the raw amino-acid sequence, 626 residues long: Glucoamylase (626 aa).

The N-terminal stretch at 1–19 (MHLVSSLLVVGAAFQAVLG) is a signal peptide. Residues 20–35 (LPDPLHEKRHSDIIKR) constitute a propeptide that is removed on maturation. N106 is a glycosylation site (N-linked (GlcNAc...) asparagine). W155 contributes to the substrate binding site. N-linked (GlcNAc...) asparagine glycosylation is present at N206. D211 acts as the Proton acceptor in catalysis. E214 functions as the Proton donor in the catalytic mechanism. N217 carries an N-linked (GlcNAc...) asparagine glycan. Residues 520–626 (CAADHEVLVT…STATLDDTWR (107 aa)) enclose the CBM20 domain.

Belongs to the glycosyl hydrolase 15 family.

It catalyses the reaction Hydrolysis of terminal (1-&gt;4)-linked alpha-D-glucose residues successively from non-reducing ends of the chains with release of beta-D-glucose.. The chain is Glucoamylase (gla-1) from Neurospora crassa (strain ATCC 24698 / 74-OR23-1A / CBS 708.71 / DSM 1257 / FGSC 987).